The chain runs to 189 residues: MSIKSDKWIRRMAEEHKMIEPFVPDQVRAAEDGRKIVSYGTSSYGYDIRCADEFKIFTNINSTIVDPKNFDEGSFVDFKGDVCIIPPNSFALARTVEYFRIPRTVLTVCLGKSTYARCGIIVNVTPFEPEWEGYVTLEFSNTTPLPAKIYANEGVAQVLFFESDEVCDVSYADRGGKYQGQRGVTLPKT.

Residues 112–117 (KSTYAR), 136–138 (TLE), glutamine 157, tyrosine 171, and glutamine 181 contribute to the dCTP site. Residue glutamate 138 is the Proton donor/acceptor of the active site.

This sequence belongs to the dCTP deaminase family. As to quaternary structure, homotrimer.

The catalysed reaction is dCTP + H2O + H(+) = dUTP + NH4(+). It participates in pyrimidine metabolism; dUMP biosynthesis; dUMP from dCTP (dUTP route): step 1/2. Its function is as follows. Catalyzes the deamination of dCTP to dUTP. In Burkholderia mallei (strain NCTC 10247), this protein is dCTP deaminase.